Here is a 212-residue protein sequence, read N- to C-terminus: Imidazole glycerol phosphate synthase subunit HisH (212 aa).

Residues 2 to 212 (LTAIIDYESG…MIGNFLTWTP (211 aa)) form the Glutamine amidotransferase type-1 domain. The active-site Nucleophile is the C87. Catalysis depends on residues H192 and E194.

As to quaternary structure, heterodimer of HisH and HisF.

It localises to the cytoplasm. It catalyses the reaction 5-[(5-phospho-1-deoxy-D-ribulos-1-ylimino)methylamino]-1-(5-phospho-beta-D-ribosyl)imidazole-4-carboxamide + L-glutamine = D-erythro-1-(imidazol-4-yl)glycerol 3-phosphate + 5-amino-1-(5-phospho-beta-D-ribosyl)imidazole-4-carboxamide + L-glutamate + H(+). It carries out the reaction L-glutamine + H2O = L-glutamate + NH4(+). It participates in amino-acid biosynthesis; L-histidine biosynthesis; L-histidine from 5-phospho-alpha-D-ribose 1-diphosphate: step 5/9. Functionally, IGPS catalyzes the conversion of PRFAR and glutamine to IGP, AICAR and glutamate. The HisH subunit catalyzes the hydrolysis of glutamine to glutamate and ammonia as part of the synthesis of IGP and AICAR. The resulting ammonia molecule is channeled to the active site of HisF. The protein is Imidazole glycerol phosphate synthase subunit HisH of Ruegeria pomeroyi (strain ATCC 700808 / DSM 15171 / DSS-3) (Silicibacter pomeroyi).